The primary structure comprises 147 residues: Holdfast attachment protein A (147 aa).

Involved in attachment of the holdfast to the cell. The holdfast is a structure that allows the bacteria to firmly adheres to surfaces. The polypeptide is Holdfast attachment protein A (hfaA) (Caulobacter vibrioides (strain ATCC 19089 / CIP 103742 / CB 15) (Caulobacter crescentus)).